We begin with the raw amino-acid sequence, 335 residues long: Lipoyl synthase (335 aa).

Residues cysteine 55, cysteine 60, cysteine 66, cysteine 81, cysteine 85, cysteine 88, and serine 292 each coordinate [4Fe-4S] cluster. The region spanning 67–281 (WEDREATFLI…SKAAEEIGFL (215 aa)) is the Radical SAM core domain.

This sequence belongs to the radical SAM superfamily. Lipoyl synthase family. Requires [4Fe-4S] cluster as cofactor.

Its subcellular location is the cytoplasm. It catalyses the reaction [[Fe-S] cluster scaffold protein carrying a second [4Fe-4S](2+) cluster] + N(6)-octanoyl-L-lysyl-[protein] + 2 oxidized [2Fe-2S]-[ferredoxin] + 2 S-adenosyl-L-methionine + 4 H(+) = [[Fe-S] cluster scaffold protein] + N(6)-[(R)-dihydrolipoyl]-L-lysyl-[protein] + 4 Fe(3+) + 2 hydrogen sulfide + 2 5'-deoxyadenosine + 2 L-methionine + 2 reduced [2Fe-2S]-[ferredoxin]. Its pathway is protein modification; protein lipoylation via endogenous pathway; protein N(6)-(lipoyl)lysine from octanoyl-[acyl-carrier-protein]: step 2/2. Functionally, catalyzes the radical-mediated insertion of two sulfur atoms into the C-6 and C-8 positions of the octanoyl moiety bound to the lipoyl domains of lipoate-dependent enzymes, thereby converting the octanoylated domains into lipoylated derivatives. This chain is Lipoyl synthase, found in Kocuria rhizophila (strain ATCC 9341 / DSM 348 / NBRC 103217 / DC2201).